A 510-amino-acid polypeptide reads, in one-letter code: Beta-glucosidase 40 (510 aa).

The N-terminal stretch at 1–29 is a signal peptide; sequence MAHRRLIMTMTKMMMMVTMMMMMDKTCIC. Residues Gln-51, His-152, and 197–198 each bind a beta-D-glucoside; that span reads NE. Glu-198 serves as the catalytic Proton donor. The cysteines at positions 217 and 225 are disulfide-linked. N-linked (GlcNAc...) asparagine glycans are attached at residues Asn-229 and Asn-278. Tyr-341 is a binding site for a beta-D-glucoside. N-linked (GlcNAc...) asparagine glycosylation is present at Asn-349. A beta-D-glucoside-binding positions include Glu-414, Trp-464, 471 to 472, and Phe-480; that span reads EW. The active-site Nucleophile is the Glu-414. N-linked (GlcNAc...) asparagine glycosylation occurs at Asn-507.

This sequence belongs to the glycosyl hydrolase 1 family.

It carries out the reaction Hydrolysis of terminal, non-reducing beta-D-glucosyl residues with release of beta-D-glucose.. This Arabidopsis thaliana (Mouse-ear cress) protein is Beta-glucosidase 40.